A 31-amino-acid chain; its full sequence is Cytochrome b6-f complex subunit 8 (31 aa).

The helical transmembrane segment at 5–25 (IVSMAWAALMVVFTFSLSLVI) threads the bilayer.

This sequence belongs to the PetN family. The 4 large subunits of the cytochrome b6-f complex are cytochrome b6, subunit IV (17 kDa polypeptide, PetD), cytochrome f and the Rieske protein, while the 4 small subunits are PetG, PetL, PetM and PetN. The complex functions as a dimer.

The protein localises to the plastid membrane. In terms of biological role, component of the cytochrome b6-f complex, which mediates electron transfer between photosystem II (PSII) and photosystem I (PSI), cyclic electron flow around PSI, and state transitions. The polypeptide is Cytochrome b6-f complex subunit 8 (Cuscuta gronovii (Common dodder)).